A 269-amino-acid polypeptide reads, in one-letter code: Formamidopyrimidine-DNA glycosylase (269 aa).

The Schiff-base intermediate with DNA role is filled by Pro-2. The active-site Proton donor is the Glu-3. Residue Lys-57 is the Proton donor; for beta-elimination activity of the active site. DNA is bound by residues His-90, Arg-109, and Lys-150. The FPG-type zinc-finger motif lies at Gln-235–Lys-269. Arg-259 serves as the catalytic Proton donor; for delta-elimination activity.

It belongs to the FPG family. Monomer. It depends on Zn(2+) as a cofactor.

The enzyme catalyses Hydrolysis of DNA containing ring-opened 7-methylguanine residues, releasing 2,6-diamino-4-hydroxy-5-(N-methyl)formamidopyrimidine.. The catalysed reaction is 2'-deoxyribonucleotide-(2'-deoxyribose 5'-phosphate)-2'-deoxyribonucleotide-DNA = a 3'-end 2'-deoxyribonucleotide-(2,3-dehydro-2,3-deoxyribose 5'-phosphate)-DNA + a 5'-end 5'-phospho-2'-deoxyribonucleoside-DNA + H(+). Its function is as follows. Involved in base excision repair of DNA damaged by oxidation or by mutagenic agents. Acts as a DNA glycosylase that recognizes and removes damaged bases. Has a preference for oxidized purines, such as 7,8-dihydro-8-oxoguanine (8-oxoG). Has AP (apurinic/apyrimidinic) lyase activity and introduces nicks in the DNA strand. Cleaves the DNA backbone by beta-delta elimination to generate a single-strand break at the site of the removed base with both 3'- and 5'-phosphates. This is Formamidopyrimidine-DNA glycosylase from Salmonella heidelberg (strain SL476).